The chain runs to 244 residues: Glutathione S-transferase theta-2 (244 aa).

In terms of domain architecture, GST N-terminal spans 2–82 (GLELFLDLVS…YLSCKYQTPD (81 aa)). Glutathione-binding positions include 40–41 (HK), 53–54 (KL), 66–67 (ES), and 104–107 (DCIR). The GST C-terminal domain maps to 88-224 (DLQARARVHE…SILEQAAKKT (137 aa)).

Belongs to the GST superfamily. Theta family. In terms of assembly, homodimer. Expressed at low levels in liver. In lung, expressed at low levels in ciliated bronchiolar cells, alveolar macrophages and alveolar type II cells.

It localises to the cytoplasm. Its subcellular location is the cytosol. The protein localises to the nucleus. It carries out the reaction RX + glutathione = an S-substituted glutathione + a halide anion + H(+). Its function is as follows. Conjugation of reduced glutathione to a wide number of exogenous and endogenous hydrophobic electrophiles. Has a sulfatase activity. In Homo sapiens (Human), this protein is Glutathione S-transferase theta-2 (GSTT2).